Reading from the N-terminus, the 109-residue chain is UPF0060 membrane protein PSPA7_1846 (109 aa).

A run of 4 helical transmembrane segments spans residues 5–25, 27–47, 59–79, and 84–104; these read LWFV…YLWL, LGKS…FALL, AYAA…AFVE, and LWSD…VLFG.

This sequence belongs to the UPF0060 family.

The protein resides in the cell inner membrane. This Pseudomonas paraeruginosa (strain DSM 24068 / PA7) (Pseudomonas aeruginosa (strain PA7)) protein is UPF0060 membrane protein PSPA7_1846.